We begin with the raw amino-acid sequence, 153 residues long: MKTFVLHIFIFALVAFASASRDSAKKIGSQYDNYETCLTEHGLTEDDIFSIGEVSSGQHKTNHEDTELHKNGCVMQCMLEKDGLMSGADYDEEKMREDYIKETGAQPGDQRIEALNACMQETKDMEDKCDKSLILVACVLAAEAVLADSSEGA.

Residues 1–19 (MKTFVLHIFIFALVAFASA) form the signal peptide. Intrachain disulfides connect Cys-37/Cys-77, Cys-73/Cys-129, and Cys-118/Cys-138.

The protein belongs to the PBP/GOBP family. In terms of assembly, homodimer.

Its subcellular location is the secreted. Functionally, colony queen number, a major feature of social organization, is associated with worker genotype for Gp-9. Colonies are headed by either a single reproductive queen (monogyne form) or multiple queens (polygyne form). Differences in worker Gp-9 genotypes between social forms may cause differences in workers' abilities to recognize queens and regulate their numbers. This chain is Pheromone-binding protein Gp-9, found in Solenopsis tridens (Fire ant).